A 311-amino-acid polypeptide reads, in one-letter code: Probable manganese-dependent inorganic pyrophosphatase (311 aa).

The Mn(2+) site is built by His-9, Asp-13, Asp-15, Asp-77, His-99, and Asp-151.

It belongs to the PPase class C family. Requires Mn(2+) as cofactor.

The protein localises to the cytoplasm. It carries out the reaction diphosphate + H2O = 2 phosphate + H(+). This Streptococcus equi subsp. zooepidemicus (strain MGCS10565) protein is Probable manganese-dependent inorganic pyrophosphatase.